The following is a 160-amino-acid chain: SsrA-binding protein (160 aa).

The protein belongs to the SmpB family.

It localises to the cytoplasm. Required for rescue of stalled ribosomes mediated by trans-translation. Binds to transfer-messenger RNA (tmRNA), required for stable association of tmRNA with ribosomes. tmRNA and SmpB together mimic tRNA shape, replacing the anticodon stem-loop with SmpB. tmRNA is encoded by the ssrA gene; the 2 termini fold to resemble tRNA(Ala) and it encodes a 'tag peptide', a short internal open reading frame. During trans-translation Ala-aminoacylated tmRNA acts like a tRNA, entering the A-site of stalled ribosomes, displacing the stalled mRNA. The ribosome then switches to translate the ORF on the tmRNA; the nascent peptide is terminated with the 'tag peptide' encoded by the tmRNA and targeted for degradation. The ribosome is freed to recommence translation, which seems to be the essential function of trans-translation. In Novosphingobium aromaticivorans (strain ATCC 700278 / DSM 12444 / CCUG 56034 / CIP 105152 / NBRC 16084 / F199), this protein is SsrA-binding protein.